Consider the following 372-residue polypeptide: NAD(P)H-quinone oxidoreductase subunit 1, chloroplastic (372 aa).

8 helical membrane passes run 28–48, 65–85, 97–117, 128–148, 166–186, 254–274, 312–332, and 352–372; these read IWICIPILVVVLGSTLGVLVI, PEYAGPLGIIQALIDGLKLIL, WLFTLGPAIVVIPIVLSYLVV, IGIGIFFWIAISSVAPMGLLI, AAQAISYEIPLALCVLAIILM, FGLFYVASYINLLVSALFVSV, GIIGLGITLVKAYIFLFLAVL, and FLLPVCLGNLLLTASFQITLL.

This sequence belongs to the complex I subunit 1 family. NDH is composed of at least 16 different subunits, 5 of which are encoded in the nucleus.

The protein resides in the plastid. It localises to the chloroplast thylakoid membrane. It catalyses the reaction a plastoquinone + NADH + (n+1) H(+)(in) = a plastoquinol + NAD(+) + n H(+)(out). The enzyme catalyses a plastoquinone + NADPH + (n+1) H(+)(in) = a plastoquinol + NADP(+) + n H(+)(out). Functionally, NDH shuttles electrons from NAD(P)H:plastoquinone, via FMN and iron-sulfur (Fe-S) centers, to quinones in the photosynthetic chain and possibly in a chloroplast respiratory chain. The immediate electron acceptor for the enzyme in this species is believed to be plastoquinone. Couples the redox reaction to proton translocation, and thus conserves the redox energy in a proton gradient. In Staurastrum punctulatum (Green alga), this protein is NAD(P)H-quinone oxidoreductase subunit 1, chloroplastic.